Consider the following 549-residue polypeptide: Glucose-6-phosphate isomerase (549 aa).

The active-site Proton donor is the Glu-353. Active-site residues include His-384 and Lys-513.

It belongs to the GPI family.

The protein resides in the cytoplasm. It carries out the reaction alpha-D-glucose 6-phosphate = beta-D-fructose 6-phosphate. Its pathway is carbohydrate biosynthesis; gluconeogenesis. It participates in carbohydrate degradation; glycolysis; D-glyceraldehyde 3-phosphate and glycerone phosphate from D-glucose: step 2/4. In terms of biological role, catalyzes the reversible isomerization of glucose-6-phosphate to fructose-6-phosphate. The protein is Glucose-6-phosphate isomerase of Brucella suis (strain ATCC 23445 / NCTC 10510).